The sequence spans 1154 residues: Nitric oxide synthase, inducible (1154 aa).

Residues 22-58 (KDINNNVEKPPGATPSPSTQDDLKNHKHHNDSPQPLT) form a disordered region. The DINNN-motif; mediates interaction with SPSB1, SPSB2 and SPSB4 signature appears at 23 to 27 (DINNN). Positions 107 and 112 each coordinate Zn(2+). Residue cysteine 197 participates in heme b binding. L-arginine-binding residues include glutamine 260, tryptophan 369, tyrosine 370, and glutamate 374. (6R)-L-erythro-5,6,7,8-tetrahydrobiopterin is bound by residues arginine 378, isoleucine 459, tryptophan 460, and phenylalanine 473. A heme b-binding site is contributed by tyrosine 488. The interval 512–532 (LKVLVKAVLFASMLMRKTMAS) is calmodulin-binding. The Flavodoxin-like domain maps to 536–674 (VTILFATETG…AFRCWAVQTF (139 aa)). Residues threonine 542, glutamate 543, threonine 544, lysine 546, and serine 547 each coordinate FMN. Tyrosine 572 is modified (phosphotyrosine). Residues serine 588, threonine 589, serine 625, cysteine 632, and glutamate 658 each contribute to the FMN site. The FAD-binding FR-type domain occupies 727-967 (KNVFTLRLKS…VRSAGNFKLP (241 aa)). Position 747 (arginine 747) interacts with NADP(+). FAD contacts are provided by histidine 769, arginine 903, tyrosine 905, serine 906, threonine 921, alanine 923, tyrosine 927, valine 940, cysteine 941, and serine 942. 8 residues coordinate NADP(+): threonine 981, arginine 1014, serine 1043, arginine 1044, lysine 1050, tyrosine 1052, glutamine 1054, and aspartate 1087.

Belongs to the NOS family. Homodimer. Interacts with NHERF1. Interacts with GAPDH; induced by oxidatively-modified low-densitity lipoprotein (LDL(ox)). Interacts with S100A8 and S100A9 to form the iNOS-S100A8/9 transnitrosylase complex. Interacts with SPSB1, SPSB2 and SPSB4. Interacts with ELOC and CUL5 in the presence of SPSB1 or SPSB2 or SPSB4. Forms a complex with ASL, ASS1 and HSP90AA1; the complex regulates cell-autonomous L-arginine synthesis and citrulline recycling while channeling extracellular L-arginine to nitric oxide synthesis pathway. The cofactor is heme b. Requires FAD as cofactor. FMN serves as cofactor. (6R)-L-erythro-5,6,7,8-tetrahydrobiopterin is required as a cofactor. In terms of processing, polyubiquitinated; mediated by SPSB1, SPSB2 and SPSB4, leading to proteasomal degradation.

Its subcellular location is the cytoplasm. It is found in the cytosol. The catalysed reaction is 2 L-arginine + 3 NADPH + 4 O2 + H(+) = 2 L-citrulline + 2 nitric oxide + 3 NADP(+) + 4 H2O. Regulated by calcium/calmodulin. In terms of biological role, produces nitric oxide (NO) which is a messenger molecule with diverse functions throughout the body. In macrophages, NO mediates tumoricidal and bactericidal actions. Also has nitrosylase activity and mediates cysteine S-nitrosylation of cytoplasmic target proteins such PTGS2/COX2. As component of the iNOS-S100A8/9 transnitrosylase complex involved in the selective inflammatory stimulus-dependent S-nitrosylation of GAPDH implicated in regulation of the GAIT complex activity and probably multiple targets including ANXA5, EZR, MSN and VIM. Involved in inflammation, enhances the synthesis of pro-inflammatory mediators such as IL6 and IL8. The polypeptide is Nitric oxide synthase, inducible (NOS2) (Canis lupus familiaris (Dog)).